Reading from the N-terminus, the 389-residue chain is Pregnancy-associated glycoprotein 1 (389 aa).

A signal peptide spans 1 to 15; the sequence is MKWLVILGLVALSEC. The Peptidase A1 domain maps to 76-386; that stretch reads YVGNITIGTP…DRGQNRIGLR (311 aa). N79 carries an N-linked (GlcNAc...) asparagine glycan. D94 is an active-site residue. A disulfide bridge connects residues C107 and C112. N-linked (GlcNAc...) asparagine glycosylation is present at N130. An intrachain disulfide couples C268 to C272. D277 is an active-site residue. Residues C311 and C345 are joined by a disulfide bond. A glycan (N-linked (GlcNAc...) asparagine) is linked at N348.

It belongs to the peptidase A1 family. Expressed throughout the chorion, with the signal localized exclusively over the trophectoderm.

It is found in the secreted. It localises to the extracellular space. In terms of biological role, appears to be proteolytically inactive. The polypeptide is Pregnancy-associated glycoprotein 1 (Sus scrofa (Pig)).